Here is a 447-residue protein sequence, read N- to C-terminus: Tubulin beta chain (447 aa).

GTP contacts are provided by glutamine 11, glutamate 69, serine 138, glycine 142, threonine 143, glycine 144, asparagine 204, and asparagine 226. Glutamate 69 is a binding site for Mg(2+). The segment at 424-447 (QYQEASVSEGEEEYDEEAPLEGEE) is disordered. Residues 432 to 447 (EGEEEYDEEAPLEGEE) show a composition bias toward acidic residues.

Belongs to the tubulin family. Dimer of alpha and beta chains. A typical microtubule is a hollow water-filled tube with an outer diameter of 25 nm and an inner diameter of 15 nM. Alpha-beta heterodimers associate head-to-tail to form protofilaments running lengthwise along the microtubule wall with the beta-tubulin subunit facing the microtubule plus end conferring a structural polarity. Microtubules usually have 13 protofilaments but different protofilament numbers can be found in some organisms and specialized cells. Mg(2+) serves as cofactor.

Its subcellular location is the cytoplasm. The protein resides in the cytoskeleton. Functionally, tubulin is the major constituent of microtubules, a cylinder consisting of laterally associated linear protofilaments composed of alpha- and beta-tubulin heterodimers. Microtubules grow by the addition of GTP-tubulin dimers to the microtubule end, where a stabilizing cap forms. Below the cap, tubulin dimers are in GDP-bound state, owing to GTPase activity of alpha-tubulin. In Cercospora beticola (Sugarbeet leaf spot fungus), this protein is Tubulin beta chain (TUB1).